A 33-amino-acid polypeptide reads, in one-letter code: Alpha-amanitin proprotein (33 aa).

A propeptide spanning residues 1–10 (MSDINATRLP) is cleaved from the precursor. Isoleucine 11 carries the post-translational modification (3R,4R)-4,5-dihydroxyisoleucine; in form alpha-amanitin. Isoleucine 11 is subject to (3R,4S)-4-hydroxyisoleucine; in form gamma-amanitin. Positions 11–18 (IWGIGCNP) form a cross-link, cyclopeptide (Ile-Pro). Positions 12–16 (WGIGC) form a cross-link, 2'-cysteinyl-6'-hydroxytryptophan sulfoxide (Trp-Cys). Proline 18 is modified (4-hydroxyproline). Positions 19–33 (SVGDEVTALLTSGEA) are excised as a propeptide.

It belongs to the MSDIN fungal toxin family. In terms of processing, processed by the macrocyclase-peptidase enzyme POPB to yield a toxic cyclic decapeptide. POPB first removes 10 residues from the N-terminus. Conformational trapping of the remaining peptide forces the enzyme to release this intermediate rather than proceed to macrocyclization. The enzyme rebinds the remaining peptide in a different conformation and catalyzes macrocyclization of the N-terminal 8 residues.

In terms of biological role, major toxin belonging to the bicyclic octapeptides amatoxins that acts by binding non-competitively to RNA polymerase II and greatly slowing the elongation of transcripts from target promoters. This Amanita fuliginea (East Asian brown death cap) protein is Alpha-amanitin proprotein.